The chain runs to 252 residues: 5'-nucleotidase SurE (252 aa).

Positions 8, 9, 39, and 91 each coordinate a divalent metal cation.

This sequence belongs to the SurE nucleotidase family. The cofactor is a divalent metal cation.

The protein localises to the cytoplasm. The enzyme catalyses a ribonucleoside 5'-phosphate + H2O = a ribonucleoside + phosphate. Its function is as follows. Nucleotidase that shows phosphatase activity on nucleoside 5'-monophosphates. This Legionella pneumophila (strain Lens) protein is 5'-nucleotidase SurE.